Consider the following 490-residue polypeptide: MFALTAYRLRCAAWLLATGIFLLLAGCSEAKAPTALERVQKEGVLRVITRNSPATYFQDRNGETGFEYELAKRFAERLGVELKIETADNLDDLYAQLSREGGPALAAAGLTPGREDDASVRYSHTYLDVTPQIIYRNGQQRPTRPEDLVGKRIMVLKGSSHAEQLAELKKQYPELKYEESDAVEVVDLLRMVDVGDIDLTLVDSNELAMNQVYFPNVRVAFDFGEARGLAWALPGGDDDSLMNEVNAFLDQAKKEGLLQRLKDRYYGHVDVLGYVGAYTFAQHLQQRLPRYESHFKQSGKQLDTDWRLLAAIGYQESLWQPGATSKTGVRGLMMLTNRTAQAMGVSNRLDPKQSIQGGSKYFVQIRSELPESIKEPDRSWFALAAYNIGGAHLEDARKMAEKEGLNPNKWLDVKKMLPRLAQKQWYAKTRYGYARGGETVHFVQNVRRYYDILTWVTQPQMEGSQIAESGLHLPGVNKTRPEEDSGDEKL.

A signal peptide spans 1-32 (MFALTAYRLRCAAWLLATGIFLLLAGCSEAKA). The segment at 33–269 (PTALERVQKE…RLKDRYYGHV (237 aa)) is non-LT domain. The LT domain stretch occupies residues 270-490 (DVLGYVGAYT…PEEDSGDEKL (221 aa)). Residue Glu-316 is part of the active site. The tract at residues 467–490 (AESGLHLPGVNKTRPEEDSGDEKL) is disordered. Over residues 479–490 (TRPEEDSGDEKL) the composition is skewed to basic and acidic residues.

In the N-terminal section; belongs to the bacterial solute-binding protein 3 family. It in the C-terminal section; belongs to the transglycosylase Slt family.

The protein localises to the cell outer membrane. It carries out the reaction Exolytic cleavage of the (1-&gt;4)-beta-glycosidic linkage between N-acetylmuramic acid (MurNAc) and N-acetylglucosamine (GlcNAc) residues in peptidoglycan, from either the reducing or the non-reducing ends of the peptidoglycan chains, with concomitant formation of a 1,6-anhydrobond in the MurNAc residue.. Murein-degrading enzyme that degrades murein glycan strands and insoluble, high-molecular weight murein sacculi, with the concomitant formation of a 1,6-anhydromuramoyl product. Lytic transglycosylases (LTs) play an integral role in the metabolism of the peptidoglycan (PG) sacculus. Their lytic action creates space within the PG sacculus to allow for its expansion as well as for the insertion of various structures such as secretion systems and flagella. This Pseudomonas aeruginosa (strain ATCC 15692 / DSM 22644 / CIP 104116 / JCM 14847 / LMG 12228 / 1C / PRS 101 / PAO1) protein is Membrane-bound lytic murein transglycosylase F.